Here is a 293-residue protein sequence, read N- to C-terminus: Ribosomal protein L11 methyltransferase (293 aa).

The S-adenosyl-L-methionine site is built by Thr145, Gly166, Asp188, and Asn230.

The protein belongs to the methyltransferase superfamily. PrmA family.

It is found in the cytoplasm. The enzyme catalyses L-lysyl-[protein] + 3 S-adenosyl-L-methionine = N(6),N(6),N(6)-trimethyl-L-lysyl-[protein] + 3 S-adenosyl-L-homocysteine + 3 H(+). In terms of biological role, methylates ribosomal protein L11. In Shewanella putrefaciens (strain CN-32 / ATCC BAA-453), this protein is Ribosomal protein L11 methyltransferase.